The chain runs to 389 residues: Large envelope protein (389 aa).

Methionine 1 bears the N-acetylmethionine mark. Residue glycine 2 is the site of N-myristoyl glycine; by host attachment. Positions 2 to 108 (GTNLSVPNPL…PPLRDSHPQA (107 aa)) are pre-S1. Positions 2–163 (GTNLSVPNPL…SARTGDPVTI (162 aa)) are pre-S. The Virion surface; in external conformation segment spans residues 2-170 (GTNLSVPNPL…VTIMENITSG (169 aa)). At 2-242 (GTNLSVPNPL…PGYRWMCLRR (241 aa)) the chain is on the intravirion; in internal conformation side. The segment covering 77–95 (VSTIPPPASTNRQSGRQPT) has biased composition (polar residues). The disordered stretch occupies residues 77–103 (VSTIPPPASTNRQSGRQPTPISPPLRD). The tract at residues 109 to 163 (MQWNSTALHQALQDPRVRGLYLPAGGSSSGTVNPAPNIASHISSISARTGDPVTI) is pre-S2. A helical membrane pass occupies residues 171-191 (FLGPLLVLQAGFFLLTRILTI). Over 192–242 (PQSLDSWWTSLNFLGGSPVCLGQNSQSPTSNHSPTSCPPICPGYRWMCLRR) the chain is Intravirion; in external conformation. The chain crosses the membrane as a helical span at residues 243 to 263 (FIIFLFILLLCLIFLLVLLDY). Residues 264–337 (QGMLPVCPLI…WASVRFSWLS (74 aa)) lie on the Virion surface side of the membrane. Asparagine 309 carries an N-linked (GlcNAc...) asparagine; by host glycan. A helical transmembrane segment spans residues 338 to 358 (LLVPFVQWFVGLSPTVWLSAI). Residues 359-364 (WMMWYW) lie on the Intravirion side of the membrane. A helical membrane pass occupies residues 365 to 387 (GPSLYSIVSPFIPLLPIFFCLWV). Over 388–389 (YI) the chain is Virion surface.

Belongs to the orthohepadnavirus major surface antigen family. In its internal form (Li-HBsAg), interacts with the capsid protein and with the isoform S. Interacts with host chaperone CANX. In terms of assembly, associates with host chaperone CANX through its pre-S2 N glycan; this association may be essential for isoform M proper secretion. As to quaternary structure, interacts with isoform L. Interacts with the antigens of satellite virus HDV (HDVAgs); this interaction is required for encapsidation of HDV genomic RNA. Post-translationally, isoform M is N-terminally acetylated by host at a ratio of 90%, and N-glycosylated by host at the pre-S2 region. In terms of processing, myristoylated.

It localises to the virion membrane. Its function is as follows. The large envelope protein exists in two topological conformations, one which is termed 'external' or Le-HBsAg and the other 'internal' or Li-HBsAg. In its external conformation the protein attaches the virus to cell receptors and thereby initiating infection. This interaction determines the species specificity and liver tropism. This attachment induces virion internalization predominantly through caveolin-mediated endocytosis. The large envelope protein also assures fusion between virion membrane and endosomal membrane. In its internal conformation the protein plays a role in virion morphogenesis and mediates the contact with the nucleocapsid like a matrix protein. Functionally, the middle envelope protein plays an important role in the budding of the virion. It is involved in the induction of budding in a nucleocapsid independent way. In this process the majority of envelope proteins bud to form subviral lipoprotein particles of 22 nm of diameter that do not contain a nucleocapsid. This Hepatitis B virus genotype A2 subtype adw (isolate Japan/Nishioka/1983) (HBV-A) protein is Large envelope protein.